The sequence spans 282 residues: Non-selective voltage-gated ion channel VDAC2 (282 aa).

An N-acetylalanine modification is found at Ala1. Transmembrane regions (beta stranded) follow at residues 25 to 34 (LVKLDVKTKS), 38 to 46 (VEFTTSGTS), 53 to 63 (VNGSLETKYKW), 68 to 75 (LTFTEKWN), 79 to 88 (TLGTEIAIED), 94 to 103 (LKLTFDTTFS), 110 to 119 (SGKVKAAYKQ), 122 to 129 (VNLGCDVD), 136 to 144 (AIHGSAVVG), 149 to 157 (LAGYQMTFD), 162 to 174 (KLTK…GYKT), 177 to 184 (FQLHTNVN), 188 to 197 (EFAGSIYQKV), 201 to 210 (METAVNLAWT), 217 to 226 (RFGIAAKYQL), 230 to 237 (AAISAKVN), 241 to 250 (LVGVGYTQTL), 253 to 262 (GVKLTLSALV), and 272 to 281 (HKLGLGLELE). Residues 241-243 (LVG) and 259-263 (SALVD) each bind NAD(+).

The protein belongs to the eukaryotic mitochondrial porin family. As to quaternary structure, monomer, homodimer and higher order oligomers; formation of higher order structures is necessary for scramblase activity. Expressed in skeletal muscle and oocytes.

It is found in the mitochondrion outer membrane. The protein localises to the membrane. The catalysed reaction is chloride(in) = chloride(out). It catalyses the reaction K(+)(in) = K(+)(out). The enzyme catalyses a 1,2-diacyl-sn-glycero-3-phospho-L-serine(in) = a 1,2-diacyl-sn-glycero-3-phospho-L-serine(out). It carries out the reaction a 1,2-diacyl-sn-glycero-3-phosphocholine(in) = a 1,2-diacyl-sn-glycero-3-phosphocholine(out). The catalysed reaction is a 1,2-diacyl-sn-glycero-3-phospho-(1D-myo-inositol)(in) = a 1,2-diacyl-sn-glycero-3-phospho-(1D-myo-inositol)(out). Non-selective voltage-gated ion channel that mediates the transport of anions and cations through the mitochondrion outer membrane and plasma membrane. The channel adopts an open conformation at zero mV and a closed conformation at both positive and negative potentials. There are two populations of channels; the main that functions in a lower open-state conductance with lower ion selectivity, that switch, in a voltage-dependent manner, from the open to a low-conducting 'closed' state and the other that has a normal ion selectivity in the typical high conductance, 'open' state. Functionally, catalyzes the scrambling of phospholipids across the outer mitochondrial membrane; the mechanism is unrelated to channel activity and is capable of translocating both anionic and zwitterionic phospholipids. This chain is Non-selective voltage-gated ion channel VDAC2, found in Xenopus laevis (African clawed frog).